The primary structure comprises 98 residues: Aspartyl/glutamyl-tRNA(Asn/Gln) amidotransferase subunit C (98 aa).

It belongs to the GatC family. As to quaternary structure, heterotrimer of A, B and C subunits.

It carries out the reaction L-glutamyl-tRNA(Gln) + L-glutamine + ATP + H2O = L-glutaminyl-tRNA(Gln) + L-glutamate + ADP + phosphate + H(+). The enzyme catalyses L-aspartyl-tRNA(Asn) + L-glutamine + ATP + H2O = L-asparaginyl-tRNA(Asn) + L-glutamate + ADP + phosphate + 2 H(+). Allows the formation of correctly charged Asn-tRNA(Asn) or Gln-tRNA(Gln) through the transamidation of misacylated Asp-tRNA(Asn) or Glu-tRNA(Gln) in organisms which lack either or both of asparaginyl-tRNA or glutaminyl-tRNA synthetases. The reaction takes place in the presence of glutamine and ATP through an activated phospho-Asp-tRNA(Asn) or phospho-Glu-tRNA(Gln). The polypeptide is Aspartyl/glutamyl-tRNA(Asn/Gln) amidotransferase subunit C (Paenarthrobacter aurescens (strain TC1)).